Consider the following 98-residue polypeptide: Large ribosomal subunit protein bL28 (98 aa).

It belongs to the bacterial ribosomal protein bL28 family.

The protein is Large ribosomal subunit protein bL28 of Chelativorans sp. (strain BNC1).